A 413-amino-acid chain; its full sequence is Multifunctional CCA protein (413 aa).

Residues G8 and R11 each contribute to the ATP site. CTP-binding residues include G8 and R11. Mg(2+) contacts are provided by D21 and D23. R91, R143, and R146 together coordinate ATP. CTP is bound by residues R91, R143, and R146. The HD domain maps to 232–333 (TGVHVMMVVD…VRLFERSDAL (102 aa)).

Belongs to the tRNA nucleotidyltransferase/poly(A) polymerase family. Bacterial CCA-adding enzyme type 1 subfamily. Monomer. Can also form homodimers and oligomers. It depends on Mg(2+) as a cofactor. The cofactor is Ni(2+).

It catalyses the reaction a tRNA precursor + 2 CTP + ATP = a tRNA with a 3' CCA end + 3 diphosphate. The catalysed reaction is a tRNA with a 3' CCA end + 2 CTP + ATP = a tRNA with a 3' CCACCA end + 3 diphosphate. Catalyzes the addition and repair of the essential 3'-terminal CCA sequence in tRNAs without using a nucleic acid template. Adds these three nucleotides in the order of C, C, and A to the tRNA nucleotide-73, using CTP and ATP as substrates and producing inorganic pyrophosphate. tRNA 3'-terminal CCA addition is required both for tRNA processing and repair. Also involved in tRNA surveillance by mediating tandem CCA addition to generate a CCACCA at the 3' terminus of unstable tRNAs. While stable tRNAs receive only 3'-terminal CCA, unstable tRNAs are marked with CCACCA and rapidly degraded. The protein is Multifunctional CCA protein of Burkholderia orbicola (strain MC0-3).